Reading from the N-terminus, the 465-residue chain is Lactaldehyde dehydrogenase (465 aa).

220-225 (GSVEVG) is a binding site for NAD(+). Catalysis depends on residues Glu-240 and Cys-274.

This sequence belongs to the aldehyde dehydrogenase family. In terms of assembly, homotetramer.

It catalyses the reaction (S)-lactaldehyde + NAD(+) + H2O = (S)-lactate + NADH + 2 H(+). The protein operates within cofactor biosynthesis; coenzyme F420 biosynthesis. Functionally, involved in F420 biosynthesis through the oxidation of lactaldehyde to lactate. The polypeptide is Lactaldehyde dehydrogenase (Methanococcus vannielii (strain ATCC 35089 / DSM 1224 / JCM 13029 / OCM 148 / SB)).